Reading from the N-terminus, the 454-residue chain is N-myc 2 proto-oncogene protein (454 aa).

3 disordered regions span residues 133 to 166 (EKMQ…HSGT), 231 to 270 (AAPP…EEEE), and 326 to 374 (SPYV…VRRR). Positions 256–270 (ALSDEVDEEEDEEEE) are enriched in acidic residues. The segment covering 363–374 (RKSDSEDSVRRR) has biased composition (basic and acidic residues). The bHLH domain occupies 371–423 (VRRRNHNILERQRRNDLRSSFTTLRDHVPELVKNEKAAKVVILKKACEYVHYL). Residues 423-444 (LQAKEHQLLMEKEKLQARQQQL) form a leucine-zipper region.

Efficient DNA binding requires dimerization with another bHLH protein.

It localises to the nucleus. The polypeptide is N-myc 2 proto-oncogene protein (N-MYC2) (Otospermophilus beecheyi (California ground squirrel)).